The following is a 70-amino-acid chain: Beta-defensin 131B (70 aa).

A signal peptide spans 1–22; it reads MRVLFFVFGVLSLMSTVPPTRS. Cystine bridges form between cysteine 29/cysteine 56, cysteine 36/cysteine 50, and cysteine 40/cysteine 57.

The protein belongs to the beta-defensin family.

Its subcellular location is the secreted. In terms of biological role, has antibacterial activity. In Homo sapiens (Human), this protein is Beta-defensin 131B.